Consider the following 310-residue polypeptide: Oxygen-dependent coproporphyrinogen-III oxidase (310 aa).

Residue Ser-93 coordinates substrate. His-97 and His-107 together coordinate a divalent metal cation. The active-site Proton donor is the His-107. A substrate-binding site is contributed by 109-111 (NVR). Residues His-146 and His-176 each contribute to the a divalent metal cation site. The important for dimerization stretch occupies residues 241-276 (YVEFNLVYDRGTLFGLQSGGRTESILMSLPPQVRWS). 259-261 (GGR) serves as a coordination point for substrate.

The protein belongs to the aerobic coproporphyrinogen-III oxidase family. As to quaternary structure, homodimer. The cofactor is a divalent metal cation.

Its subcellular location is the cytoplasm. It catalyses the reaction coproporphyrinogen III + O2 + 2 H(+) = protoporphyrinogen IX + 2 CO2 + 2 H2O. It functions in the pathway porphyrin-containing compound metabolism; protoporphyrin-IX biosynthesis; protoporphyrinogen-IX from coproporphyrinogen-III (O2 route): step 1/1. Involved in the heme biosynthesis. Catalyzes the aerobic oxidative decarboxylation of propionate groups of rings A and B of coproporphyrinogen-III to yield the vinyl groups in protoporphyrinogen-IX. This Pseudomonas fluorescens (strain SBW25) protein is Oxygen-dependent coproporphyrinogen-III oxidase.